The following is a 369-amino-acid chain: GDSL esterase/lipase At5g41890 (369 aa).

The Nucleophile role is filled by Ser-32. Catalysis depends on residues Asp-334 and His-337.

Belongs to the 'GDSL' lipolytic enzyme family.

In Arabidopsis thaliana (Mouse-ear cress), this protein is GDSL esterase/lipase At5g41890.